A 499-amino-acid polypeptide reads, in one-letter code: Neuropeptide CCHamide-1 receptor (499 aa).

Residues 1 to 85 lie on the Extracellular side of the membrane; the sequence is MIANLVSMET…GRRPETYIVP (85 aa). 2 N-linked (GlcNAc...) asparagine glycosylation sites follow: N33 and N61. A helical transmembrane segment spans residues 86 to 106; that stretch reads ILFALIFVVGVLGNGTLIVVF. Topologically, residues 107-117 are cytoplasmic; the sequence is LSVRQMRNVPN. The chain crosses the membrane as a helical span at residues 118–138; that stretch reads TYILSLALADLLVIITTVPLA. Residues 139-162 are Extracellular-facing; it reads STVYTVEYWPYGSFLCSLSEFMKD. Residues C154 and C240 are joined by a disulfide bond. The helical transmembrane segment at 163–183 threads the bilayer; that stretch reads VSIGVSVFTLTALSGDRYFAI. Residues 184–203 lie on the Cytoplasmic side of the membrane; sequence VDPLRKFHAHGGGRRATRMT. The helical transmembrane segment at 204-224 threads the bilayer; sequence LATAVSIWLLAILCGLPALIG. Topologically, residues 225–259 are extracellular; that stretch reads SNLKHLGINEKSIVICYPYPEEWGINYAKSMVLLH. The helical transmembrane segment at 260-280 threads the bilayer; that stretch reads FLVYYAIPLVVIAVFYVLIAL. The Cytoplasmic portion of the chain corresponds to 281-309; the sequence is HLMYSASVPGEIQGAVRQVRARRKVAVTV. A helical membrane pass occupies residues 310 to 330; that stretch reads LAFVVIFGICFLPYHVFFLWF. Topologically, residues 331-348 are extracellular; it reads YFWPTAQDDYNAFWHVLR. A helical membrane pass occupies residues 349–369; sequence IVAYCMSFANSCANPVALYFV. The Cytoplasmic portion of the chain corresponds to 370–499; the sequence is SGAFRKHFNR…PAKFQESLLN (130 aa).

Belongs to the G-protein coupled receptor 1 family. In terms of tissue distribution, low levels in larval brain and gut with higher levels in adult brain and gut. In the brain expression is widely distributed, including strong expression in the mushroom bodies. Expressed weakly in s-LNv (small ventral lateral neurons) and strongly in l-LNv (large ventral lateral neurons), but not in other clock neurons.

The protein localises to the cell membrane. Receptor for the neuropeptide CCHamide-1. Plays a role in the modulation of starvation-induced olfactory behavior where starved flies show increased responsiveness to food odorants, repellants and pheromones. Contributes to regulation of sleep latency (the time required to fall asleep), amount of sleep and depth of sleep (arousability). Involved in modulation of PDP1 and PDF levels in s-LNv (small ventral lateral neurons) clock neurons in response to CCHa1 released by DN1a (anterior dorsal neurons 1) clock neurons, to regulate morning activity. In a subset of dopaminergic cells in the protocerebral anterior medial (PAM) cluster involved in suppressing arousability in response to CCHa1 secreted by gut enteroendocrine cells. This Drosophila melanogaster (Fruit fly) protein is Neuropeptide CCHamide-1 receptor.